The sequence spans 381 residues: Alkanesulfonate monooxygenase (381 aa).

It belongs to the SsuD family. Homotetramer.

It catalyses the reaction an alkanesulfonate + FMNH2 + O2 = an aldehyde + FMN + sulfite + H2O + 2 H(+). Its function is as follows. Catalyzes the desulfonation of aliphatic sulfonates. The chain is Alkanesulfonate monooxygenase from Escherichia coli O6:H1 (strain CFT073 / ATCC 700928 / UPEC).